We begin with the raw amino-acid sequence, 181 residues long: NAD(P)H-quinone oxidoreductase subunit 6, chloroplastic (181 aa).

The next 5 helical transmembrane spans lie at P13–G33, I35–L55, A64–I84, F98–I118, and L152–I172.

It belongs to the complex I subunit 6 family. NDH is composed of at least 16 different subunits, 5 of which are encoded in the nucleus.

It localises to the plastid. The protein resides in the chloroplast thylakoid membrane. The catalysed reaction is a plastoquinone + NADH + (n+1) H(+)(in) = a plastoquinol + NAD(+) + n H(+)(out). It catalyses the reaction a plastoquinone + NADPH + (n+1) H(+)(in) = a plastoquinol + NADP(+) + n H(+)(out). In terms of biological role, NDH shuttles electrons from NAD(P)H:plastoquinone, via FMN and iron-sulfur (Fe-S) centers, to quinones in the photosynthetic chain and possibly in a chloroplast respiratory chain. The immediate electron acceptor for the enzyme in this species is believed to be plastoquinone. Couples the redox reaction to proton translocation, and thus conserves the redox energy in a proton gradient. The protein is NAD(P)H-quinone oxidoreductase subunit 6, chloroplastic (ndhG) of Staurastrum punctulatum (Green alga).